A 613-amino-acid chain; its full sequence is MSKAKEGDYGSIKKVSGPVVVADNMGGSAMYELVRVGTGELIGEIIRLEGDTATIQVYEETSGLTVGDGVLRTKQPLSVDLGPGILGNIFDGIQRPLKAIADVSGDVFIPRGVNVPSLDQTKQWEFRPSAFKVGDRVTGGDIIGIVPENSLLDHKVMLLPQAKGTVTYIAAPGNYTINEKIIEVEFQGAKYEYSMKQSWPVRSPRPVVEKLLADTPLLTGQRVLDSLFPGVRGGTCAIPGAFGCGKTVISQALSKYSNSDGIVYVGCGERGNEMAEVLMDFPQLTMTMPDGREESIMKRTTLVANTSNMPVAAREASIYTGITLSEYFRDMGYNFAMMADSTSRWAEALREISGRLAEMPADSGYPAYLGARLASFYERSGRVACIGSPEREGSVTIVGAVSPPGGDFSDPVTSATLGIVQVFWGLDKKLAQRKHFPSVNWLISYSKYLNALEPFYEKFDSDFVTLRQVAREVLQKEDELNEIVQLVGKDALAESDKIILETARFLKEDYLQQNSFTKYDKYCPFYKSVGMMRNIVTFHRLATQAIERTAAGNVDGQKITFNIIKAKLGDLLYKVSSQKFEDPSDGEGVVTAHLNELNEELKEKFRALEDEYR.

240–247 provides a ligand contact to ATP; the sequence is GAFGCGKT.

Belongs to the ATPase alpha/beta chains family. In terms of assembly, V-ATPase is a heteromultimeric enzyme composed of a peripheral catalytic V1 complex (main components: subunits A, B, C, D, E, and F) attached to an integral membrane V0 proton pore complex (main component: the proteolipid protein).

It carries out the reaction ATP + H2O + 4 H(+)(in) = ADP + phosphate + 5 H(+)(out). Its function is as follows. Catalytic subunit of the peripheral V1 complex of vacuolar ATPase. V-ATPase vacuolar ATPase is responsible for acidifying a variety of intracellular compartments in eukaryotic cells. The chain is V-type proton ATPase catalytic subunit A isoform 1 from Acetabularia acetabulum (Mermaid's wine glass).